The chain runs to 552 residues: CTP synthase (552 aa).

The interval 1–270 is amidoligase domain; the sequence is MTKFVFVTGG…DGLICDKLRL (270 aa). Residue serine 13 coordinates CTP. Residue serine 13 participates in UTP binding. ATP is bound by residues 14–19 and aspartate 71; that span reads SLGKGI. Mg(2+)-binding residues include aspartate 71 and glutamate 144. Residues 151-153, 191-196, and lysine 227 contribute to the CTP site; these read DIE and KTKPTQ. UTP-binding positions include 191-196 and lysine 227; that span reads KTKPTQ. Residues 295 to 548 enclose the Glutamine amidotransferase type-1 domain; that stretch reads QIAMVGKYVE…IKAAVEHQKP (254 aa). Residue glycine 357 coordinates L-glutamine. Cysteine 384 functions as the Nucleophile; for glutamine hydrolysis in the catalytic mechanism. L-glutamine is bound by residues 385 to 388 and glutamate 408; that span reads LGMQ. The segment at 432-451 is disordered; that stretch reads KTRSENSDLGGTMRLGAQSS. Arginine 474 contributes to the L-glutamine binding site. Catalysis depends on residues histidine 521 and glutamate 523.

It belongs to the CTP synthase family. Homotetramer.

It catalyses the reaction UTP + L-glutamine + ATP + H2O = CTP + L-glutamate + ADP + phosphate + 2 H(+). The catalysed reaction is L-glutamine + H2O = L-glutamate + NH4(+). The enzyme catalyses UTP + NH4(+) + ATP = CTP + ADP + phosphate + 2 H(+). It participates in pyrimidine metabolism; CTP biosynthesis via de novo pathway; CTP from UDP: step 2/2. With respect to regulation, allosterically activated by GTP, when glutamine is the substrate; GTP has no effect on the reaction when ammonia is the substrate. The allosteric effector GTP functions by stabilizing the protein conformation that binds the tetrahedral intermediate(s) formed during glutamine hydrolysis. Inhibited by the product CTP, via allosteric rather than competitive inhibition. Its function is as follows. Catalyzes the ATP-dependent amination of UTP to CTP with either L-glutamine or ammonia as the source of nitrogen. Regulates intracellular CTP levels through interactions with the four ribonucleotide triphosphates. This is CTP synthase from Acidovorax sp. (strain JS42).